We begin with the raw amino-acid sequence, 659 residues long: Enzymatic polyprotein (659 aa).

The protease stretch occupies residues Met1–Asp180. Residue Asp34 is part of the active site. Residues Leu252–Ile436 form the Reverse transcriptase domain.

It belongs to the caulimoviridae enzymatic polyprotein family.

The catalysed reaction is DNA(n) + a 2'-deoxyribonucleoside 5'-triphosphate = DNA(n+1) + diphosphate. Functionally, encodes for at least two polypeptides: protease (PR) and reverse transcriptase (RT). The protease processes the polyprotein in cis. Reverse transcriptase is multifunctional enzyme that converts the viral RNA genome into dsDNA in viral cytoplasmic capsids. This enzyme displays a DNA polymerase activity that can copy either DNA or RNA templates, and a ribonuclease H (RNase H) activity that cleaves the RNA strand of RNA-DNA heteroduplexes in a partially processive 3'- to 5'-endonucleasic mode. Neo-synthesized pregenomic RNA (pgRNA) are encapsidated, and reverse-transcribed inside the nucleocapsid. Partial (+)DNA is synthesized from the (-)DNA template and generates the relaxed circular DNA (RC-DNA) genome. After budding and infection, the RC-DNA migrates in the nucleus, and is converted into a plasmid-like covalently closed circular DNA (cccDNA). This Dianthus caryophyllus (Carnation) protein is Enzymatic polyprotein.